The chain runs to 718 residues: Peroxisomal bifunctional enzyme (718 aa).

An enoyl-CoA hydratase / isomerase region spans residues 2 to 280; the sequence is ARYELVKRSV…FAQRTAEKWT (279 aa). Position 100 (G100) interacts with substrate. Residues 281-567 form a 3-hydroxyacyl-CoA dehydrogenase region; that stretch reads LPSGAQWNNS…DMVCQQGRFG (287 aa). The Microbody targeting signal motif lies at 716-718; it reads SHL.

It in the N-terminal section; belongs to the enoyl-CoA hydratase/isomerase family. This sequence in the C-terminal section; belongs to the 3-hydroxyacyl-CoA dehydrogenase family. As to quaternary structure, monomer.

The protein localises to the peroxisome. The catalysed reaction is a (3S)-3-hydroxyacyl-CoA = a (2E)-enoyl-CoA + H2O. It carries out the reaction a 4-saturated-(3S)-3-hydroxyacyl-CoA = a (3E)-enoyl-CoA + H2O. The enzyme catalyses a (3Z)-enoyl-CoA = a 4-saturated (2E)-enoyl-CoA. It catalyses the reaction a (3E)-enoyl-CoA = a 4-saturated (2E)-enoyl-CoA. The catalysed reaction is a (3S)-3-hydroxyacyl-CoA + NAD(+) = a 3-oxoacyl-CoA + NADH + H(+). It carries out the reaction (2S,3S)-3-hydroxy-2-methylbutanoyl-CoA = (2E)-2-methylbut-2-enoyl-CoA + H2O. The enzyme catalyses (3S)-hydroxyhexadecanoyl-CoA + NAD(+) = 3-oxohexadecanoyl-CoA + NADH + H(+). It catalyses the reaction (3S)-hydroxyhexadecanoyl-CoA = (2E)-hexadecenoyl-CoA + H2O. The catalysed reaction is (2E)-hexadecenedioyl-CoA + H2O = (3S)-hydroxyhexadecanedioyl-CoA. It carries out the reaction (3S)-hydroxyhexadecanedioyl-CoA + NAD(+) = 3-oxohexadecanedioyl-CoA + NADH + H(+). The enzyme catalyses (3E,5Z)-tetradecadienoyl-CoA = (2E,5Z)-tetradecadienoyl-CoA. It catalyses the reaction (3E,5Z)-octadienoyl-CoA = (2E,5Z)-octadienoyl-CoA. The catalysed reaction is (3S)-hydroxydecanoyl-CoA + NAD(+) = 3-oxodecanoyl-CoA + NADH + H(+). It carries out the reaction (3E)-decenoyl-CoA = (2E)-decenoyl-CoA. The enzyme catalyses (3Z)-hexenoyl-CoA = (2E)-hexenoyl-CoA. It catalyses the reaction (3E)-hexenoyl-CoA = (2E)-hexenoyl-CoA. The catalysed reaction is (3S)-hydroxydecanoyl-CoA = (2E)-decenoyl-CoA + H2O. It carries out the reaction (3S)-hydroxyhexanoyl-CoA = (2E)-hexenoyl-CoA + H2O. The protein operates within lipid metabolism; fatty acid beta-oxidation. Peroxisomal trifunctional enzyme possessing 2-enoyl-CoA hydratase, 3-hydroxyacyl-CoA dehydrogenase, and delta 3, delta 2-enoyl-CoA isomerase activities. Catalyzes two of the four reactions of the long straight chain fatty acids peroxisomal beta-oxidation pathway. Can also use branched-chain fatty acids such as 2-methyl-2E-butenoyl-CoA as a substrate, which is hydrated into (2S,3S)-3-hydroxy-2-methylbutanoyl-CoA. Optimal isomerase for 2,5 double bonds into 3,5 form isomerization in a range of enoyl-CoA species. Also able to isomerize both 3-cis and 3-trans double bonds into the 2-trans form in a range of enoyl-CoA species. Regulates the amount of medium-chain dicarboxylic fatty acids which are essential regulators of all fatty acid oxidation pathways. Also involved in the degradation of long-chain dicarboxylic acids through peroxisomal beta-oxidation. This chain is Peroxisomal bifunctional enzyme (ehhadh), found in Danio rerio (Zebrafish).